Here is a 414-residue protein sequence, read N- to C-terminus: Glutamyl-tRNA reductase (414 aa).

Substrate-binding positions include 51–54 (TCNR), Ser-107, 112–114 (EYE), and Gln-118. Cys-52 acts as the Nucleophile in catalysis. 187-192 (GAGEIG) contacts NADP(+).

The protein belongs to the glutamyl-tRNA reductase family. In terms of assembly, homodimer.

It carries out the reaction (S)-4-amino-5-oxopentanoate + tRNA(Glu) + NADP(+) = L-glutamyl-tRNA(Glu) + NADPH + H(+). Its pathway is porphyrin-containing compound metabolism; protoporphyrin-IX biosynthesis; 5-aminolevulinate from L-glutamyl-tRNA(Glu): step 1/2. In terms of biological role, catalyzes the NADPH-dependent reduction of glutamyl-tRNA(Glu) to glutamate 1-semialdehyde (GSA). This Sulfolobus acidocaldarius (strain ATCC 33909 / DSM 639 / JCM 8929 / NBRC 15157 / NCIMB 11770) protein is Glutamyl-tRNA reductase.